The following is a 231-amino-acid chain: Uracil-DNA glycosylase (231 aa).

The Proton acceptor role is filled by Asp71.

This sequence belongs to the uracil-DNA glycosylase (UDG) superfamily. UNG family.

The protein resides in the cytoplasm. The catalysed reaction is Hydrolyzes single-stranded DNA or mismatched double-stranded DNA and polynucleotides, releasing free uracil.. Excises uracil residues from the DNA which can arise as a result of misincorporation of dUMP residues by DNA polymerase or due to deamination of cytosine. This is Uracil-DNA glycosylase from Pseudomonas aeruginosa (strain ATCC 15692 / DSM 22644 / CIP 104116 / JCM 14847 / LMG 12228 / 1C / PRS 101 / PAO1).